Reading from the N-terminus, the 227-residue chain is Probable methylthioribulose-1-phosphate dehydratase (227 aa).

Cys87 serves as a coordination point for substrate. Residues His105 and His107 each contribute to the Zn(2+) site. Residue Glu129 is the Proton donor/acceptor of the active site. Position 185 (His185) interacts with Zn(2+).

The protein belongs to the aldolase class II family. MtnB subfamily. Zn(2+) is required as a cofactor.

The protein localises to the cytoplasm. It carries out the reaction 5-(methylsulfanyl)-D-ribulose 1-phosphate = 5-methylsulfanyl-2,3-dioxopentyl phosphate + H2O. It functions in the pathway amino-acid biosynthesis; L-methionine biosynthesis via salvage pathway; L-methionine from S-methyl-5-thio-alpha-D-ribose 1-phosphate: step 2/6. In terms of biological role, catalyzes the dehydration of methylthioribulose-1-phosphate (MTRu-1-P) into 2,3-diketo-5-methylthiopentyl-1-phosphate (DK-MTP-1-P). In Drosophila erecta (Fruit fly), this protein is Probable methylthioribulose-1-phosphate dehydratase.